The sequence spans 178 residues: ATP synthase subunit delta (178 aa).

Belongs to the ATPase delta chain family. As to quaternary structure, F-type ATPases have 2 components, F(1) - the catalytic core - and F(0) - the membrane proton channel. F(1) has five subunits: alpha(3), beta(3), gamma(1), delta(1), epsilon(1). F(0) has three main subunits: a(1), b(2) and c(10-14). The alpha and beta chains form an alternating ring which encloses part of the gamma chain. F(1) is attached to F(0) by a central stalk formed by the gamma and epsilon chains, while a peripheral stalk is formed by the delta and b chains.

It is found in the cell membrane. In terms of biological role, f(1)F(0) ATP synthase produces ATP from ADP in the presence of a proton or sodium gradient. F-type ATPases consist of two structural domains, F(1) containing the extramembraneous catalytic core and F(0) containing the membrane proton channel, linked together by a central stalk and a peripheral stalk. During catalysis, ATP synthesis in the catalytic domain of F(1) is coupled via a rotary mechanism of the central stalk subunits to proton translocation. Functionally, this protein is part of the stalk that links CF(0) to CF(1). It either transmits conformational changes from CF(0) to CF(1) or is implicated in proton conduction. This chain is ATP synthase subunit delta, found in Streptococcus equinus (Streptococcus bovis).